A 336-amino-acid chain; its full sequence is D-alanine--D-alanine ligase (336 aa).

Positions Lys124–Asn330 constitute an ATP-grasp domain. An ATP-binding site is contributed by Ala154–Glu209. Asp284, Glu297, and Asn299 together coordinate Mg(2+).

Belongs to the D-alanine--D-alanine ligase family. Mg(2+) is required as a cofactor. Requires Mn(2+) as cofactor.

Its subcellular location is the cytoplasm. The enzyme catalyses 2 D-alanine + ATP = D-alanyl-D-alanine + ADP + phosphate + H(+). It participates in cell wall biogenesis; peptidoglycan biosynthesis. In terms of biological role, cell wall formation. The polypeptide is D-alanine--D-alanine ligase (Shewanella sp. (strain ANA-3)).